Consider the following 574-residue polypeptide: Avenacosidase 1 (574 aa).

A chloroplast-targeting transit peptide spans 1-55 (MALLCSALSNSTHPSFRSHIGANSENLWHLSADPAQKSKRRCNLTLSSRAARISS). Residues glutamine 88, histidine 192, and 237 to 238 (NE) contribute to the a beta-D-glucoside site. Residue glutamate 238 is the Proton donor of the active site. Cysteines 258 and 264 form a disulfide. A beta-D-glucoside is bound by residues tyrosine 381, glutamate 454, tryptophan 505, 512–513 (EW), and phenylalanine 521. The Nucleophile role is filled by glutamate 454.

This sequence belongs to the glycosyl hydrolase 1 family. As to quaternary structure, homo- and heteromultimer with P60B in a 1:1 stoichiometry. Aggregates to form the fibrillar stromacentre. In terms of tissue distribution, expressed in caryopses, coleoptiles, primary leaves, and etiolated and green seedlings, but not in roots.

It localises to the plastid. The protein resides in the chloroplast stroma. The catalysed reaction is avenacoside B + H2O = 26-desgluco-avenacoside B + D-glucose. Inhibited by N-(3-Dimethylaminopropyl)-N'-ethylcarbodiimide hydrochloride (EDC). Its function is as follows. Beta-glucosidase acting as a preformed defense system. Hydrolyzes the bisdesmosides avenacosides A and B to 26-desgluco-avenacosides exhibiting fungicidal activity. Can use beta-fucoside &gt; beta-glucoside &gt; beta-galactoside &gt; beta-xyloside as substrates, but not alpha-glycosides, beta-thioglucosides and disaccharides. In Avena sativa (Oat), this protein is Avenacosidase 1 (P60A).